Reading from the N-terminus, the 426-residue chain is Histidine--tRNA ligase (426 aa).

The protein belongs to the class-II aminoacyl-tRNA synthetase family. As to quaternary structure, homodimer.

The protein resides in the cytoplasm. The enzyme catalyses tRNA(His) + L-histidine + ATP = L-histidyl-tRNA(His) + AMP + diphosphate + H(+). The polypeptide is Histidine--tRNA ligase (Hydrogenovibrio crunogenus (strain DSM 25203 / XCL-2) (Thiomicrospira crunogena)).